We begin with the raw amino-acid sequence, 276 residues long: NH(3)-dependent NAD(+) synthetase (276 aa).

An ATP-binding site is contributed by 43–50 (GISGGVDS). Asp-49 serves as a coordination point for Mg(2+). Arg-146 serves as a coordination point for deamido-NAD(+). Residue Thr-166 coordinates ATP. Mg(2+) is bound at residue Glu-171. Deamido-NAD(+)-binding residues include Lys-179 and Asp-186. Residues Lys-195 and Thr-217 each contribute to the ATP site. 266–267 (HK) is a deamido-NAD(+) binding site.

The protein belongs to the NAD synthetase family. Homodimer.

It carries out the reaction deamido-NAD(+) + NH4(+) + ATP = AMP + diphosphate + NAD(+) + H(+). Its pathway is cofactor biosynthesis; NAD(+) biosynthesis; NAD(+) from deamido-NAD(+) (ammonia route): step 1/1. Functionally, catalyzes the ATP-dependent amidation of deamido-NAD to form NAD. Uses ammonia as a nitrogen source. In Aliivibrio fischeri (strain ATCC 700601 / ES114) (Vibrio fischeri), this protein is NH(3)-dependent NAD(+) synthetase.